Consider the following 195-residue polypeptide: Large ribosomal subunit protein eL15 (195 aa).

Positions glycine 174–arginine 195 are disordered.

Belongs to the eukaryotic ribosomal protein eL15 family.

This is Large ribosomal subunit protein eL15 from Picrophilus torridus (strain ATCC 700027 / DSM 9790 / JCM 10055 / NBRC 100828 / KAW 2/3).